Consider the following 218-residue polypeptide: 3-oxo-tetronate 4-phosphate decarboxylase (218 aa).

Catalysis depends on glutamate 86, which acts as the Proton acceptor. Positions 86, 105, and 107 each coordinate Zn(2+). Tyrosine 132 serves as the catalytic Proton donor. Histidine 172 contributes to the Zn(2+) binding site.

This sequence belongs to the aldolase class II family. AraD/FucA subfamily. Zn(2+) is required as a cofactor.

The catalysed reaction is 3-dehydro-4-O-phospho-D-erythronate + H(+) = dihydroxyacetone phosphate + CO2. It carries out the reaction 3-dehydro-4-O-phospho-L-erythronate + H(+) = dihydroxyacetone phosphate + CO2. Its function is as follows. Catalyzes the decarboxylation of 3-oxo-tetronate 4-phosphate to dihydroxyacetone phosphate (DHAP) and CO(2). This chain is 3-oxo-tetronate 4-phosphate decarboxylase, found in Pectobacterium atrosepticum (strain SCRI 1043 / ATCC BAA-672) (Erwinia carotovora subsp. atroseptica).